Consider the following 155-residue polypeptide: 3-hydroxyacyl-[acyl-carrier-protein] dehydratase FabZ (155 aa).

The active site involves histidine 58.

The protein belongs to the thioester dehydratase family. FabZ subfamily.

It is found in the cytoplasm. The enzyme catalyses a (3R)-hydroxyacyl-[ACP] = a (2E)-enoyl-[ACP] + H2O. Functionally, involved in unsaturated fatty acids biosynthesis. Catalyzes the dehydration of short chain beta-hydroxyacyl-ACPs and long chain saturated and unsaturated beta-hydroxyacyl-ACPs. In Alkalilimnicola ehrlichii (strain ATCC BAA-1101 / DSM 17681 / MLHE-1), this protein is 3-hydroxyacyl-[acyl-carrier-protein] dehydratase FabZ.